The primary structure comprises 447 residues: Ion-translocating oxidoreductase complex subunit C (447 aa).

4Fe-4S ferredoxin-type domains follow at residues 359-389 and 399-430; these read AEVL…GRIA and RCRE…LIRY. Positions 369, 372, 375, 379, 408, 411, 414, and 418 each coordinate [4Fe-4S] cluster.

The protein belongs to the 4Fe4S bacterial-type ferredoxin family. RnfC subfamily. The Rnf complex is probably composed of eight subunits, including RnfA, RnfB, RnfC, RnfD, RnfE and RnfG. [4Fe-4S] cluster serves as cofactor.

It localises to the cell membrane. In terms of biological role, part of a membrane-bound complex that couples electron transfer with translocation of ions across the membrane. Catalyzes Na(+) transport, most probably coupled to electron transfer from reduced ferredoxin to methanophenazine and heterodisulfide reductase. Involved in heterodisulfide reduction during methanogenesis from acetate. This is Ion-translocating oxidoreductase complex subunit C from Methanosarcina acetivorans (strain ATCC 35395 / DSM 2834 / JCM 12185 / C2A).